A 218-amino-acid polypeptide reads, in one-letter code: Thiamine-phosphate synthase (218 aa).

4-amino-2-methyl-5-(diphosphooxymethyl)pyrimidine-binding positions include 43–47 and N78; that span reads QFRDK. Positions 79 and 98 each coordinate Mg(2+). S117 contacts 4-amino-2-methyl-5-(diphosphooxymethyl)pyrimidine. Position 143–145 (143–145) interacts with 2-[(2R,5Z)-2-carboxy-4-methylthiazol-5(2H)-ylidene]ethyl phosphate; sequence TNS. K146 serves as a coordination point for 4-amino-2-methyl-5-(diphosphooxymethyl)pyrimidine. 2-[(2R,5Z)-2-carboxy-4-methylthiazol-5(2H)-ylidene]ethyl phosphate contacts are provided by residues G174 and 194-195; that span reads IS.

The protein belongs to the thiamine-phosphate synthase family. It depends on Mg(2+) as a cofactor.

It catalyses the reaction 2-[(2R,5Z)-2-carboxy-4-methylthiazol-5(2H)-ylidene]ethyl phosphate + 4-amino-2-methyl-5-(diphosphooxymethyl)pyrimidine + 2 H(+) = thiamine phosphate + CO2 + diphosphate. It carries out the reaction 2-(2-carboxy-4-methylthiazol-5-yl)ethyl phosphate + 4-amino-2-methyl-5-(diphosphooxymethyl)pyrimidine + 2 H(+) = thiamine phosphate + CO2 + diphosphate. The enzyme catalyses 4-methyl-5-(2-phosphooxyethyl)-thiazole + 4-amino-2-methyl-5-(diphosphooxymethyl)pyrimidine + H(+) = thiamine phosphate + diphosphate. It functions in the pathway cofactor biosynthesis; thiamine diphosphate biosynthesis; thiamine phosphate from 4-amino-2-methyl-5-diphosphomethylpyrimidine and 4-methyl-5-(2-phosphoethyl)-thiazole: step 1/1. In terms of biological role, condenses 4-methyl-5-(beta-hydroxyethyl)thiazole monophosphate (THZ-P) and 2-methyl-4-amino-5-hydroxymethyl pyrimidine pyrophosphate (HMP-PP) to form thiamine monophosphate (TMP). This chain is Thiamine-phosphate synthase, found in Lactococcus lactis subsp. cremoris (strain MG1363).